The primary structure comprises 163 residues: MPKPPDYSELSDSLTLAVGTGRFSGPLHRAWRMMNFRQRMGWIGVGLYLLASAAAFYYVFEINETYNRLALEHIQQHPEEPLEGTTWTHSLKTRLLSLPFWFWTVVFLIPYLQMFLFLYSCTRADPKTVGYCIIPICLAVICNRHQAFVKASNQISRLQLIDT.

2 consecutive transmembrane segments (helical) span residues 40–60 (MGWIGVGLYLLASAAAFYYVF) and 98–118 (LPFWFWTVVFLIPYLQMFLFL).

The protein belongs to the LYSET family. As to quaternary structure, interacts with GNPTAB; this interaction is important for proper localization of GNPTAB in Golgi stacks. Interacts with MBTPS1.

It localises to the golgi apparatus membrane. Functionally, required for mannose-6-phosphate-dependent trafficking of lysosomal enzymes. LYSET bridges GlcNAc-1-phosphate transferase (GNPTAB), to the membrane-bound transcription factor site-1 protease (MBTPS1), thus allowing proteolytic activation of the GNPTAB. GNPTAB is involved in the regulation of M6P-dependent Golgi-to-lysosome trafficking of lysosomal enzymes. LYSET is thus an essential factor for maturation and delivery of lysosomal hydrolases. The sequence is that of Lysosomal enzyme trafficking factor (LYSET) from Bos taurus (Bovine).